A 107-amino-acid polypeptide reads, in one-letter code: Diuretic hormone 45 (107 aa).

Residues 1-44 (LYAMSPMAARYSAGAPWLYLLADMPRDSQRLVDPADLHEGRARP) constitute a propeptide that is removed on maturation. Residue Val-91 is modified to Valine amide.

As to expression, expressed in corpora cardiaca (CC), corpora allata (CA), antennal lobe (AL) and gnathal ganglion (GNG) (at protein level). Expression in AL and GNG detected in some animals, in CC and CA in few animals (at protein level).

The protein resides in the secreted. In terms of biological role, regulation of fluid secretion. The sequence is that of Diuretic hormone 45 from Agrotis ipsilon (Black cutworm moth).